The sequence spans 345 residues: 3-dehydroquinate synthase (345 aa).

NAD(+) is bound by residues 62–67 (DGEEYK), 96–100 (GVISD), 120–121 (TT), Lys-133, Lys-142, and 160–163 (FLKT). 3 residues coordinate Zn(2+): Glu-175, His-233, and His-250.

This sequence belongs to the sugar phosphate cyclases superfamily. Dehydroquinate synthase family. The cofactor is Co(2+). Zn(2+) is required as a cofactor. NAD(+) serves as cofactor.

The protein localises to the cytoplasm. It carries out the reaction 7-phospho-2-dehydro-3-deoxy-D-arabino-heptonate = 3-dehydroquinate + phosphate. Its pathway is metabolic intermediate biosynthesis; chorismate biosynthesis; chorismate from D-erythrose 4-phosphate and phosphoenolpyruvate: step 2/7. Its function is as follows. Catalyzes the conversion of 3-deoxy-D-arabino-heptulosonate 7-phosphate (DAHP) to dehydroquinate (DHQ). The chain is 3-dehydroquinate synthase from Campylobacter concisus (strain 13826).